Reading from the N-terminus, the 868-residue chain is LPS-assembly protein LptD (868 aa).

An N-terminal signal peptide occupies residues methionine 1–alanine 24.

The protein belongs to the LptD family. Component of the lipopolysaccharide transport and assembly complex. Interacts with LptE and LptA.

The protein resides in the cell outer membrane. Functionally, together with LptE, is involved in the assembly of lipopolysaccharide (LPS) at the surface of the outer membrane. This chain is LPS-assembly protein LptD, found in Francisella tularensis subsp. tularensis (strain FSC 198).